A 161-amino-acid chain; its full sequence is 2-C-methyl-D-erythritol 2,4-cyclodiphosphate synthase (161 aa).

A divalent metal cation is bound by residues D10 and H12. Residues 10–12 (DVH) and 36–37 (HS) each bind 4-CDP-2-C-methyl-D-erythritol 2-phosphate. H44 contacts a divalent metal cation. Residues 58–60 (DIG), 63–67 (FPDTD), 102–108 (AQVPKMA), 134–137 (TTTE), F141, and R144 each bind 4-CDP-2-C-methyl-D-erythritol 2-phosphate.

It belongs to the IspF family. In terms of assembly, homotrimer. A divalent metal cation is required as a cofactor.

The enzyme catalyses 4-CDP-2-C-methyl-D-erythritol 2-phosphate = 2-C-methyl-D-erythritol 2,4-cyclic diphosphate + CMP. Its pathway is isoprenoid biosynthesis; isopentenyl diphosphate biosynthesis via DXP pathway; isopentenyl diphosphate from 1-deoxy-D-xylulose 5-phosphate: step 4/6. Functionally, involved in the biosynthesis of isopentenyl diphosphate (IPP) and dimethylallyl diphosphate (DMAPP), two major building blocks of isoprenoid compounds. Catalyzes the conversion of 4-diphosphocytidyl-2-C-methyl-D-erythritol 2-phosphate (CDP-ME2P) to 2-C-methyl-D-erythritol 2,4-cyclodiphosphate (ME-CPP) with a corresponding release of cytidine 5-monophosphate (CMP). This Shewanella baltica (strain OS223) protein is 2-C-methyl-D-erythritol 2,4-cyclodiphosphate synthase.